The sequence spans 875 residues: Alanine--tRNA ligase (875 aa).

Zn(2+) contacts are provided by His-564, His-568, Cys-666, and His-670.

It belongs to the class-II aminoacyl-tRNA synthetase family. In terms of assembly, homotetramer. Zn(2+) is required as a cofactor.

The protein localises to the cytoplasm. It catalyses the reaction tRNA(Ala) + L-alanine + ATP = L-alanyl-tRNA(Ala) + AMP + diphosphate. Catalyzes the attachment of alanine to tRNA(Ala) in a two-step reaction: alanine is first activated by ATP to form Ala-AMP and then transferred to the acceptor end of tRNA(Ala). Also edits incorrectly charged Ser-tRNA(Ala) and Gly-tRNA(Ala) via its editing domain. The protein is Alanine--tRNA ligase of Citrobacter koseri (strain ATCC BAA-895 / CDC 4225-83 / SGSC4696).